We begin with the raw amino-acid sequence, 194 residues long: ATP-dependent Clp protease proteolytic subunit (194 aa).

The active-site Nucleophile is Ser-98. Residue His-123 is part of the active site.

It belongs to the peptidase S14 family. As to quaternary structure, fourteen ClpP subunits assemble into 2 heptameric rings which stack back to back to give a disk-like structure with a central cavity, resembling the structure of eukaryotic proteasomes.

It is found in the cytoplasm. The catalysed reaction is Hydrolysis of proteins to small peptides in the presence of ATP and magnesium. alpha-casein is the usual test substrate. In the absence of ATP, only oligopeptides shorter than five residues are hydrolyzed (such as succinyl-Leu-Tyr-|-NHMec, and Leu-Tyr-Leu-|-Tyr-Trp, in which cleavage of the -Tyr-|-Leu- and -Tyr-|-Trp bonds also occurs).. In terms of biological role, cleaves peptides in various proteins in a process that requires ATP hydrolysis. Has a chymotrypsin-like activity. Plays a major role in the degradation of misfolded proteins. This chain is ATP-dependent Clp protease proteolytic subunit, found in Syntrophotalea carbinolica (strain DSM 2380 / NBRC 103641 / GraBd1) (Pelobacter carbinolicus).